The primary structure comprises 378 residues: Nitronate monooxygenase (378 aa).

The propeptide occupies 1 to 15; that stretch reads MHFPGHSSKKEESAQ. 37–39 provides a ligand contact to FMN; that stretch reads PMY. The Proton acceptor role is filled by His-196. Residue His-196 coordinates substrate. Residues 229 to 231 and 252 to 253 contribute to the FMN site; these read AGG and GT.

It belongs to the nitronate monooxygenase family. NMO class II subfamily. In terms of assembly, homodimer. It depends on FMN as a cofactor.

It carries out the reaction ethylnitronate + O2 = chemical entity + acetaldehyde + nitrite + H(+). Functionally, catalyzes the oxidation of alkyl nitronates to produce the corresponding carbonyl compounds and nitrites. Anionic forms of nitroalkanes are much better substrates than are neutral forms. The protein is Nitronate monooxygenase (ncd-2) of Neurospora crassa (strain ATCC 24698 / 74-OR23-1A / CBS 708.71 / DSM 1257 / FGSC 987).